A 41-amino-acid chain; its full sequence is Diuretic hormone 1 (41 aa).

Isoleucine 41 bears the Isoleucine amide mark.

The protein resides in the secreted. Its function is as follows. Regulation of fluid secretion. May stimulate primary urine secretion by Malpighian tubules and causes a dose-dependent stimulation of cAMP levels in the tubules. In Hyles lineata (White-lined sphinx moth), this protein is Diuretic hormone 1.